The chain runs to 507 residues: Putative UDP-glucuronosyltransferase ugt-60 (507 aa).

The N-terminal stretch at 1 to 15 is a signal peptide; that stretch reads MYLPIFCIFLSVVDS. N312 is a glycosylation site (N-linked (GlcNAc...) asparagine). The helical transmembrane segment at 379 to 399 threads the bilayer; the sequence is YNSFLEAAQAGIPAVLMPLFA.

It belongs to the UDP-glycosyltransferase family.

The protein localises to the membrane. The catalysed reaction is glucuronate acceptor + UDP-alpha-D-glucuronate = acceptor beta-D-glucuronoside + UDP + H(+). This is Putative UDP-glucuronosyltransferase ugt-60 (ugt-60) from Caenorhabditis elegans.